Reading from the N-terminus, the 171-residue chain is uncharacterized protein (171 aa).

Belongs to the mimivirus R24/R907 family.

This is an uncharacterized protein from Acanthamoeba polyphaga (Amoeba).